Reading from the N-terminus, the 143-residue chain is Large ribosomal subunit protein uL13 (143 aa).

Belongs to the universal ribosomal protein uL13 family. In terms of assembly, part of the 50S ribosomal subunit.

Functionally, this protein is one of the early assembly proteins of the 50S ribosomal subunit, although it is not seen to bind rRNA by itself. It is important during the early stages of 50S assembly. In Alkaliphilus oremlandii (strain OhILAs) (Clostridium oremlandii (strain OhILAs)), this protein is Large ribosomal subunit protein uL13.